The sequence spans 285 residues: MKLCGFDIGLDQPFFLIAGPCVVESEQLQMDTAGTLKEITSSLGIPFIFKSSFDKANRSSGTSFRGPGREKGLEILAKVKRELGLPVLTDVHTEDDITEAAKVVDVLQTPAFLCRQTDFIRAVAQSGKPVNIKKGQFLAPHDMKNVIDKARAAAKEAGLPEDSFMACERGASFGYNNLVSDMRSLAIMRETGAPVVFDATHSVQLPGGQGTTSGGQREMVPVLSRAAVAVGVAGLFMETHPDPAKALSDGPNAVPLKHMKALLETLLALDQVTKKNAFLEDVFQS.

Belongs to the KdsA family.

It is found in the cytoplasm. It carries out the reaction D-arabinose 5-phosphate + phosphoenolpyruvate + H2O = 3-deoxy-alpha-D-manno-2-octulosonate-8-phosphate + phosphate. It participates in carbohydrate biosynthesis; 3-deoxy-D-manno-octulosonate biosynthesis; 3-deoxy-D-manno-octulosonate from D-ribulose 5-phosphate: step 2/3. It functions in the pathway bacterial outer membrane biogenesis; lipopolysaccharide biosynthesis. This chain is 2-dehydro-3-deoxyphosphooctonate aldolase, found in Variovorax paradoxus (strain S110).